The primary structure comprises 91 residues: Acylphosphatase (91 aa).

In terms of domain architecture, Acylphosphatase-like spans His3–Tyr91. Active-site residues include Arg18 and Asn36.

Belongs to the acylphosphatase family.

The catalysed reaction is an acyl phosphate + H2O = a carboxylate + phosphate + H(+). This chain is Acylphosphatase (acyP), found in Oceanobacillus iheyensis (strain DSM 14371 / CIP 107618 / JCM 11309 / KCTC 3954 / HTE831).